Here is a 102-residue protein sequence, read N- to C-terminus: NADH-quinone oxidoreductase subunit K (102 aa).

Helical transmembrane passes span 5–25 (LGHF…GIFL), 31–51 (IVLL…FVAF), and 62–82 (VFVF…LAIL).

This sequence belongs to the complex I subunit 4L family. As to quaternary structure, NDH-1 is composed of 14 different subunits. Subunits NuoA, H, J, K, L, M, N constitute the membrane sector of the complex.

Its subcellular location is the cell inner membrane. It catalyses the reaction a quinone + NADH + 5 H(+)(in) = a quinol + NAD(+) + 4 H(+)(out). NDH-1 shuttles electrons from NADH, via FMN and iron-sulfur (Fe-S) centers, to quinones in the respiratory chain. The immediate electron acceptor for the enzyme in this species is believed to be ubiquinone. Couples the redox reaction to proton translocation (for every two electrons transferred, four hydrogen ions are translocated across the cytoplasmic membrane), and thus conserves the redox energy in a proton gradient. The sequence is that of NADH-quinone oxidoreductase subunit K from Paracidovorax citrulli (strain AAC00-1) (Acidovorax citrulli).